The chain runs to 198 residues: Neutrophil gelatinase-associated lipocalin (198 aa).

Positions 1 to 20 are cleaved as a signal peptide; it reads MGLGVLCLALVLLGVLQSQA. The residue at position 21 (glutamine 21) is a Pyrrolidone carboxylic acid. 72-74 provides a ligand contact to a carboxymycobactin; sequence YST. The N-linked (GlcNAc...) asparagine glycan is linked to asparagine 85. A disulfide bond links cysteine 96 and cysteine 195. Residue tyrosine 126 participates in enterobactin binding. A carboxymycobactin contacts are provided by lysine 145, lysine 154, and tyrosine 158. Lysine 154 is a binding site for enterobactin.

It belongs to the calycin superfamily. Lipocalin family. In terms of assembly, monomer. Homodimer; disulfide-linked. Heterodimer; disulfide-linked with MMP9. In terms of tissue distribution, detected in the ureteric bud in embryonic kidney (at protein level).

The protein resides in the secreted. The protein localises to the cytoplasmic granule lumen. Its subcellular location is the cytoplasmic vesicle lumen. Iron-trafficking protein involved in multiple processes such as apoptosis, innate immunity and renal development. Binds iron through association with 2,3-dihydroxybenzoic acid (2,3-DHBA), a siderophore that shares structural similarities with bacterial enterobactin, and delivers or removes iron from the cell, depending on the context. Iron-bound form (holo-24p3) is internalized following binding to the SLC22A17 (24p3R) receptor, leading to release of iron and subsequent increase of intracellular iron concentration. In contrast, association of the iron-free form (apo-24p3) with the SLC22A17 (24p3R) receptor is followed by association with an intracellular siderophore, iron chelation and iron transfer to the extracellular medium, thereby reducing intracellular iron concentration. Involved in apoptosis due to interleukin-3 (IL3) deprivation: iron-loaded form increases intracellular iron concentration without promoting apoptosis, while iron-free form decreases intracellular iron levels, inducing expression of the proapoptotic protein BCL2L11/BIM, resulting in apoptosis. Involved in innate immunity; limits bacterial proliferation by sequestering iron bound to microbial siderophores, such as enterobactin. Can also bind siderophores from M.tuberculosis. This Rattus norvegicus (Rat) protein is Neutrophil gelatinase-associated lipocalin (Lcn2).